We begin with the raw amino-acid sequence, 281 residues long: 2,3,4,5-tetrahydropyridine-2,6-dicarboxylate N-succinyltransferase (281 aa).

The protein belongs to the transferase hexapeptide repeat family.

The protein localises to the cytoplasm. The enzyme catalyses (S)-2,3,4,5-tetrahydrodipicolinate + succinyl-CoA + H2O = (S)-2-succinylamino-6-oxoheptanedioate + CoA. The protein operates within amino-acid biosynthesis; L-lysine biosynthesis via DAP pathway; LL-2,6-diaminopimelate from (S)-tetrahydrodipicolinate (succinylase route): step 1/3. The protein is 2,3,4,5-tetrahydropyridine-2,6-dicarboxylate N-succinyltransferase of Methylobacterium sp. (strain 4-46).